The following is a 1485-amino-acid chain: Cystic fibrosis transmembrane conductance regulator (1485 aa).

Over 1–78 the chain is Cytoplasmic; the sequence is MQKTPLEKAS…KLINALKRCF (78 aa). The helical transmembrane segment at 79-99 threads the bilayer; it reads FWKFLFYGILLYLGEVTKAVQ. The ABC transmembrane type-1 1 domain maps to 82 to 366; that stretch reads FLFYGILLYL…WAVQTWYDSL (285 aa). Topologically, residues 100 to 123 are extracellular; the sequence is PLLLGRIIASYDRDNEHERSIAYY. The chain crosses the membrane as a helical span at residues 124–147; that stretch reads LAIGLCLLFVVRMLLLHPAIFGLH. Residues 148-196 lie on the Cytoplasmic side of the membrane; that stretch reads HIGMQMRIAMFSLIYKKTLKLSSKVLDKISTGQLVSLLSNNLNKFDEGL. The helical transmembrane segment at 197 to 217 threads the bilayer; sequence ALAHFVWIAPLQVLLLMGLLW. Residues 218 to 223 are Extracellular-facing; it reads DLLQAS. A helical transmembrane segment spans residues 224–244; the sequence is AFCGLGFLIILSLFQARLGRM. Topologically, residues 245-299 are cytoplasmic; sequence MMKYKDKRAGKINERLVITSQIIENIQSVKAYCWENAMEKIIETIRETELKLTRK. The helical transmembrane segment at 300-320 threads the bilayer; sequence AAYVRYFNSSAFFFSGFFVVF. At 321–340 the chain is on the extracellular side; the sequence is LSIVPHLLLDGISLRKIFTT. A helical transmembrane segment spans residues 341–359; that stretch reads ISFSIVLRMAVTRQFPWAV. Topologically, residues 360 to 860 are cytoplasmic; the sequence is QTWYDSLGVI…YLRFLTAHKN (501 aa). ATP is bound by residues tryptophan 402, serine 435, 459–466, and glutamine 494; that span reads GSTGAGKT. The region spanning 422–647 is the ABC transporter 1 domain; it reads ISNEDPSAFF…RPEFSSHLIG (226 aa). Positions 652-833 are disordered R region; the sequence is NAERRNSIIT…EEINEEDLKE (182 aa). A compositionally biased stretch (polar residues) spans 750-760; that stretch reads PRSNFLNTGPT. Residues 861–881 traverse the membrane as a helical segment; the sequence is FIFILVFCLVIFFVEVAASSA. Positions 880–1163 constitute an ABC transmembrane type-1 2 domain; that stretch reads SAWLWIIKRN…ASIDVDSLMR (284 aa). Residues 882 to 923 are Extracellular-facing; the sequence is WLWIIKRNAPAINMTSNENVSEVSDTLSVIVTHTSFYYVFYI. N-linked (GlcNAc...) asparagine glycosylation is found at asparagine 894 and asparagine 900. The discontinuously helical transmembrane segment at 924–944 threads the bilayer; the sequence is YVGVADSLLALGIFRGLPLVH. Residues 945-995 are Cytoplasmic-facing; that stretch reads SLISVSKVLHKKMLHAILHAPMSTFNTMRAGRILNRFSKDTAILDDILPLS. Residues 996 to 1016 traverse the membrane as a helical segment; the sequence is IFDLTQLVLIVIGAITVVSLL. The Extracellular segment spans residues 1017 to 1018; it reads EP. The chain crosses the membrane as a helical span at residues 1019–1039; that stretch reads YIFLATVPVIVAFILLRSYFL. At 1040 to 1100 the chain is on the cytoplasmic side; sequence HTSQQLKQLE…TANWFLYLST (61 aa). A helical transmembrane segment spans residues 1101 to 1121; sequence LRWFQMTIEMIFVIFFIAVSF. Residues 1122–1135 lie on the Extracellular side of the membrane; that stretch reads ISIATSGAGEEKVG. Residues 1136–1156 form a helical membrane-spanning segment; sequence IVLTLAMNIMNTLQWAVNASI. Residues 1157 to 1485 lie on the Cytoplasmic side of the membrane; sequence DVDSLMRSVS…TEEEVQDTRL (329 aa). Residues 1213–1446 enclose the ABC transporter 2 domain; the sequence is MTVKNLSANY…KSFFKQAISH (234 aa). ATP is bound by residues tyrosine 1222 and 1247 to 1254; that span reads GRTGSGKS. A disordered region spans residues 1458–1485; the sequence is RNSSKRKSRPQISALQEETEEEVQDTRL. Over residues 1474-1485 the composition is skewed to acidic residues; that stretch reads EETEEEVQDTRL. The PDZ-binding signature appears at 1483–1485; the sequence is TRL.

Belongs to the ABC transporter superfamily. ABCC family. CFTR transporter (TC 3.A.1.202) subfamily. As to quaternary structure, monomer; does not require oligomerization for channel activity. May form oligomers in the membrane. Post-translationally, phosphorylated; cAMP treatment promotes phosphorylation and activates the channel. Dephosphorylation decreases the ATPase activity (in vitro). Phosphorylation at PKA sites activates the channel. Phosphorylation at PKC sites enhances the response to phosphorylation by PKA.

Its subcellular location is the apical cell membrane. The protein resides in the early endosome membrane. It localises to the cell membrane. The protein localises to the recycling endosome membrane. It is found in the endoplasmic reticulum membrane. The catalysed reaction is ATP + H2O + closed Cl(-) channel = ADP + phosphate + open Cl(-) channel.. The enzyme catalyses chloride(in) = chloride(out). It catalyses the reaction hydrogencarbonate(in) = hydrogencarbonate(out). It carries out the reaction ATP + H2O = ADP + phosphate + H(+). Epithelial ion channel that plays an important role in the regulation of epithelial ion and water transport and fluid homeostasis. Mediates the transport of chloride ions across the cell membrane. Possesses an intrinsic ATPase activity and utilizes ATP to gate its channel; the passive flow of anions through the channel is gated by cycles of ATP binding and hydrolysis by the ATP-binding domains. The ion channel is also permeable to HCO(3)(-); selectivity depends on the extracellular chloride concentration. Exerts its function also by modulating the activity of other ion channels and transporters. Contributes to the regulation of the pH and the ion content of the epithelial fluid layer. The sequence is that of Cystic fibrosis transmembrane conductance regulator from Xenopus laevis (African clawed frog).